Reading from the N-terminus, the 394-residue chain is Elongation factor Tu (394 aa).

A tr-type G domain is found at 10-205 (KPHMNVGTIG…SMDNYFDLPE (196 aa)). The interval 19–26 (GHVDHGKT) is G1. 19-26 (GHVDHGKT) provides a ligand contact to GTP. Position 26 (T26) interacts with Mg(2+). Positions 61–65 (GITIN) are G2. Residues 82–85 (DCPG) form a G3 region. GTP is bound by residues 82–86 (DCPGH) and 137–140 (NKLD). Residues 137-140 (NKLD) are G4. The tract at residues 173 to 175 (SAF) is G5.

Belongs to the TRAFAC class translation factor GTPase superfamily. Classic translation factor GTPase family. EF-Tu/EF-1A subfamily. Monomer.

It is found in the cytoplasm. The catalysed reaction is GTP + H2O = GDP + phosphate + H(+). Its function is as follows. GTP hydrolase that promotes the GTP-dependent binding of aminoacyl-tRNA to the A-site of ribosomes during protein biosynthesis. The sequence is that of Elongation factor Tu from Borreliella burgdorferi (strain ATCC 35210 / DSM 4680 / CIP 102532 / B31) (Borrelia burgdorferi).